The primary structure comprises 154 residues: Ribonuclease H (154 aa).

In terms of domain architecture, RNase H type-1 spans 1 to 142; it reads MTKQVEIFTD…CDELAREGAN (142 aa). Mg(2+) is bound by residues aspartate 10, glutamate 48, aspartate 70, and aspartate 134.

Belongs to the RNase H family. In terms of assembly, monomer. Mg(2+) serves as cofactor.

The protein localises to the cytoplasm. The enzyme catalyses Endonucleolytic cleavage to 5'-phosphomonoester.. Functionally, endonuclease that specifically degrades the RNA of RNA-DNA hybrids. The polypeptide is Ribonuclease H (Yersinia enterocolitica serotype O:8 / biotype 1B (strain NCTC 13174 / 8081)).